The chain runs to 336 residues: Glyceraldehyde-3-phosphate dehydrogenase (336 aa).

Residues 12-13 (RI), D34, R78, and T121 contribute to the NAD(+) site. D-glyceraldehyde 3-phosphate is bound by residues 151–153 (SCT), T182, R199, 212–213 (TG), and R235. C152 functions as the Nucleophile in the catalytic mechanism. N316 contributes to the NAD(+) binding site.

It belongs to the glyceraldehyde-3-phosphate dehydrogenase family. Homotetramer.

It is found in the cytoplasm. The catalysed reaction is D-glyceraldehyde 3-phosphate + phosphate + NAD(+) = (2R)-3-phospho-glyceroyl phosphate + NADH + H(+). Its pathway is carbohydrate degradation; glycolysis; pyruvate from D-glyceraldehyde 3-phosphate: step 1/5. Catalyzes the oxidative phosphorylation of glyceraldehyde 3-phosphate (G3P) to 1,3-bisphosphoglycerate (BPG) using the cofactor NAD. The first reaction step involves the formation of a hemiacetal intermediate between G3P and a cysteine residue, and this hemiacetal intermediate is then oxidized to a thioester, with concomitant reduction of NAD to NADH. The reduced NADH is then exchanged with the second NAD, and the thioester is attacked by a nucleophilic inorganic phosphate to produce BPG. In Streptococcus dysgalactiae subsp. equisimilis (Streptococcus equisimilis), this protein is Glyceraldehyde-3-phosphate dehydrogenase (gap).